The primary structure comprises 658 residues: Gametogenetin (658 aa).

2 disordered regions span residues 1–268 (MGNV…ASGG) and 285–584 (KQGP…SNKG). Positions 14 to 30 (SRKEQASDRASDSRRTP) are enriched in basic and acidic residues. The span at 54 to 83 (PGSSGPPGLLIPPESQASSSTLPLTLELPS) shows a compositional bias: low complexity. The interval 127-491 (RGLLEASHRG…APTPPSTLSP (365 aa)) is interaction with GGNBP1. Over residues 163–188 (PAPPPTPLEPRKQLPPAPSTCDPQPP) the composition is skewed to pro residues. The span at 194–204 (LASSATSPTES) shows a compositional bias: polar residues. Residues 252–264 (SSSGPLAAKASLG) are compositionally biased toward low complexity. A Phosphoserine modification is found at Ser384. A compositionally biased stretch (low complexity) spans 398-409 (PRRPTPALLAPP). The span at 423–460 (RPVPPSPQQIPPLPPPPPTPPATPPPAPPPTPQPPALP) shows a compositional bias: pro residues. The segment covering 489–516 (LSPTAAAEQAPAPTPAPVTSQVPATTTA) has biased composition (low complexity). Positions 496-658 (EQAPAPTPAP…HYDLQATHST (163 aa)) are interactions with ZNF403/GGNBP2 and OAZ3. Over residues 527-536 (IRTRRNKGPR) the composition is skewed to basic residues.

As to quaternary structure, interacts with FANCL, GGNBP1 and ZNF403/GGNBP2.

Its function is as follows. May be involved in spermatogenesis. This chain is Gametogenetin (Ggn), found in Rattus norvegicus (Rat).